The chain runs to 435 residues: Serine--tRNA ligase (435 aa).

A disordered region spans residues Met-48–Ser-68. Basic and acidic residues predominate over residues Lys-49–Ser-68. Thr-230–Glu-232 provides a ligand contact to L-serine. Residue Arg-261–Glu-263 participates in ATP binding. Glu-284 contributes to the L-serine binding site. ATP is bound at residue Glu-348–Ser-351. Ser-383 is a binding site for L-serine.

This sequence belongs to the class-II aminoacyl-tRNA synthetase family. Type-1 seryl-tRNA synthetase subfamily. As to quaternary structure, homodimer. The tRNA molecule binds across the dimer.

Its subcellular location is the cytoplasm. The enzyme catalyses tRNA(Ser) + L-serine + ATP = L-seryl-tRNA(Ser) + AMP + diphosphate + H(+). It catalyses the reaction tRNA(Sec) + L-serine + ATP = L-seryl-tRNA(Sec) + AMP + diphosphate + H(+). It functions in the pathway aminoacyl-tRNA biosynthesis; selenocysteinyl-tRNA(Sec) biosynthesis; L-seryl-tRNA(Sec) from L-serine and tRNA(Sec): step 1/1. In terms of biological role, catalyzes the attachment of serine to tRNA(Ser). Is also able to aminoacylate tRNA(Sec) with serine, to form the misacylated tRNA L-seryl-tRNA(Sec), which will be further converted into selenocysteinyl-tRNA(Sec). The sequence is that of Serine--tRNA ligase from Limosilactobacillus reuteri (strain DSM 20016) (Lactobacillus reuteri).